The primary structure comprises 463 residues: Putative protein FAM90A2P (463 aa).

4 disordered regions span residues 1-42 (MTAR…DPRL), 67-115 (ALVP…PQRK), 150-295 (MPVH…PAQA), and 326-365 (ALENLQPPPAATELGPSTSPQMGRRTPAQVPGVDRQPPHS). 3 stretches are compositionally biased toward basic and acidic residues: residues 74 to 83 (GKKEGKENLK), 97 to 114 (NKDKGEKEERPRQQDPQR), and 159 to 170 (PCVDPELADRSA). A compositionally biased stretch (low complexity) spans 180 to 198 (LASLSPLRKASLRSSSSLG).

The protein belongs to the FAM90 family.

In Homo sapiens (Human), this protein is Putative protein FAM90A2P (FAM90A2P).